The following is a 38-amino-acid chain: Potassium channel toxin alpha-KTx 3.8 (38 aa).

Disulfide bonds link C8-C28, C14-C33, and C18-C35. Residues 26–33 (GKCMNGKC) form an interaction with Ca(2+)-activated K(+) channels region.

Expressed by the venom gland.

The protein localises to the secreted. Potassium channel inhibitor. The polypeptide is Potassium channel toxin alpha-KTx 3.8 (Hottentotta tamulus sindicus (Scorpion)).